The sequence spans 503 residues: ATP synthase subunit alpha (503 aa).

170 to 177 (GDKQTGKT) is an ATP binding site.

Belongs to the ATPase alpha/beta chains family. In terms of assembly, F-type ATPases have 2 components, CF(1) - the catalytic core - and CF(0) - the membrane proton channel. CF(1) has five subunits: alpha(3), beta(3), gamma(1), delta(1), epsilon(1). CF(0) has three main subunits: a(1), b(2) and c(9-12). The alpha and beta chains form an alternating ring which encloses part of the gamma chain. CF(1) is attached to CF(0) by a central stalk formed by the gamma and epsilon chains, while a peripheral stalk is formed by the delta and b chains.

It localises to the cell inner membrane. It carries out the reaction ATP + H2O + 4 H(+)(in) = ADP + phosphate + 5 H(+)(out). Produces ATP from ADP in the presence of a proton gradient across the membrane. The alpha chain is a regulatory subunit. In Helicobacter acinonychis (strain Sheeba), this protein is ATP synthase subunit alpha.